We begin with the raw amino-acid sequence, 69 residues long: Large ribosomal subunit protein uL29 (69 aa).

This sequence belongs to the universal ribosomal protein uL29 family.

The protein is Large ribosomal subunit protein uL29 of Staphylococcus haemolyticus (strain JCSC1435).